The chain runs to 246 residues: UDP-N-acetyl-D-mannosaminuronic acid transferase (246 aa).

Belongs to the glycosyltransferase 26 family.

It catalyses the reaction UDP-N-acetyl-alpha-D-mannosaminouronate + N-acetyl-alpha-D-glucosaminyl-di-trans,octa-cis-undecaprenyl diphosphate = beta-D-ManNAcA-(1-&gt;4)-alpha-D-GlcNAc-di-trans,octa-cis-undecaprenyl diphosphate + UDP + H(+). The protein operates within bacterial outer membrane biogenesis; enterobacterial common antigen biosynthesis. Functionally, catalyzes the synthesis of Und-PP-GlcNAc-ManNAcA (Lipid II), the second lipid-linked intermediate involved in enterobacterial common antigen (ECA) synthesis. The protein is UDP-N-acetyl-D-mannosaminuronic acid transferase of Yersinia pseudotuberculosis serotype IB (strain PB1/+).